Consider the following 356-residue polypeptide: Histidinol-phosphate aminotransferase (356 aa).

Lys214 is modified (N6-(pyridoxal phosphate)lysine).

It belongs to the class-II pyridoxal-phosphate-dependent aminotransferase family. Histidinol-phosphate aminotransferase subfamily. Homodimer. Requires pyridoxal 5'-phosphate as cofactor.

It catalyses the reaction L-histidinol phosphate + 2-oxoglutarate = 3-(imidazol-4-yl)-2-oxopropyl phosphate + L-glutamate. It participates in amino-acid biosynthesis; L-histidine biosynthesis; L-histidine from 5-phospho-alpha-D-ribose 1-diphosphate: step 7/9. This Escherichia coli (strain 55989 / EAEC) protein is Histidinol-phosphate aminotransferase.